Reading from the N-terminus, the 161-residue chain is Phosphopantetheine adenylyltransferase (161 aa).

S10 provides a ligand contact to substrate. ATP contacts are provided by residues 10 to 11 (SF) and H18. 3 residues coordinate substrate: K42, A75, and R89. ATP contacts are provided by residues 90–92 (GLR), E100, and 125–131 (LSPISSS).

The protein belongs to the bacterial CoaD family. Homohexamer. Mg(2+) is required as a cofactor.

It localises to the cytoplasm. The catalysed reaction is (R)-4'-phosphopantetheine + ATP + H(+) = 3'-dephospho-CoA + diphosphate. It participates in cofactor biosynthesis; coenzyme A biosynthesis; CoA from (R)-pantothenate: step 4/5. Reversibly transfers an adenylyl group from ATP to 4'-phosphopantetheine, yielding dephospho-CoA (dPCoA) and pyrophosphate. This is Phosphopantetheine adenylyltransferase from Streptococcus agalactiae serotype Ia (strain ATCC 27591 / A909 / CDC SS700).